The chain runs to 470 residues: MAFSRGVSPGGALLRTSRMFSLPPVIPPPPGNKLQMISERASATEAYPTHQVLTTFESSRSRGDWGLKRPLPLKSTTGTTYPMVKVKEMDSLEQITDFTSGTQHGLTLKKFQALNIPISTPSEISDPSRLFRPVQRSVFEADTDVTAFSPDEQIQEAEKRWKFSGPWLAGMTPGEFKEYLAKTVRPKRAEFRKFIQKKIAAQKTEAANRELQETAALRGDAVAETQEPFKPESITDDEVTEYLRRLRNDNQVLYDLVGQFLDLAPLKPPQAAEARQHSLLVNLRATDSPYGGRGPPITHPSAGISYLRTAAYLNNHPIYGPQKSHPPVQARVLKPRRGGLGNDAKIGVAGFVADGPLGTSHSNLRGNSVMDKFDPSIEGGAKLWVNVDKATVDSTGRVQLTVSDAKATDVLIAKELIGDAREPIFGSAPKRQEKTFKKIPMTAARLRGRYENSDSPSSPTMSGSSGYGLR.

The tract at residues 436–470 (FKKIPMTAARLRGRYENSDSPSSPTMSGSSGYGLR) is disordered. Low complexity predominate over residues 453 to 464 (SDSPSSPTMSGS).

This sequence belongs to the bacterial ribosomal protein bS1 family. Component of the mitochondrial small ribosomal subunit (mt-SSU). Mature N.crassa 74S mitochondrial ribosomes consist of a small (37S) and a large (54S) subunit. The 37S small subunit contains a 16S ribosomal RNA (16S mt-rRNA) and 32 different proteins. The 54S large subunit contains a 23S rRNA (23S mt-rRNA) and 42 different proteins.

Its subcellular location is the mitochondrion. Its function is as follows. Component of the mitochondrial ribosome (mitoribosome), a dedicated translation machinery responsible for the synthesis of mitochondrial genome-encoded proteins, including at least some of the essential transmembrane subunits of the mitochondrial respiratory chain. The mitoribosomes are attached to the mitochondrial inner membrane and translation products are cotranslationally integrated into the membrane. This chain is Small ribosomal subunit protein bS1m (mrp51), found in Neurospora crassa (strain ATCC 24698 / 74-OR23-1A / CBS 708.71 / DSM 1257 / FGSC 987).